The following is a 187-amino-acid chain: Meiotically up-regulated protein C1442.13c (187 aa).

Disordered stretches follow at residues 15–46 (QWENVEASPKPPPRKPKIVQPKKKPSKHLSNE) and 119–145 (IQEGSVSTNTKKRMDGHVVGSSAPAIN). Over residues 26–41 (PPRKPKIVQPKKKPSK) the composition is skewed to basic residues. The region spanning 145-187 (NNGKGKQLLEMMGWSRGKGLGSENQGMVDPVVAVVKNNKQGLH) is the G-patch domain.

The protein resides in the nucleus. It localises to the cytoplasm. The protein localises to the cytoskeleton. Its subcellular location is the microtubule organizing center. It is found in the spindle pole body. Its function is as follows. Has a role in meiosis and sporulation. Required for meiotic chromosome segregation. The polypeptide is Meiotically up-regulated protein C1442.13c (Schizosaccharomyces pombe (strain 972 / ATCC 24843) (Fission yeast)).